Consider the following 414-residue polypeptide: tRNA dimethylallyltransferase (414 aa).

Residue 33 to 40 (APTASGKT) coordinates ATP. 35 to 40 (TASGKT) contacts substrate. Interaction with substrate tRNA stretches follow at residues 58 to 61 (DSAL), 182 to 186 (QRITR), and 266 to 271 (RCVGYR).

The protein belongs to the IPP transferase family. As to quaternary structure, monomer. It depends on Mg(2+) as a cofactor.

It carries out the reaction adenosine(37) in tRNA + dimethylallyl diphosphate = N(6)-dimethylallyladenosine(37) in tRNA + diphosphate. Catalyzes the transfer of a dimethylallyl group onto the adenine at position 37 in tRNAs that read codons beginning with uridine, leading to the formation of N6-(dimethylallyl)adenosine (i(6)A). The protein is tRNA dimethylallyltransferase of Psychrobacter cryohalolentis (strain ATCC BAA-1226 / DSM 17306 / VKM B-2378 / K5).